The sequence spans 609 residues: Protein tesmin/TSO1-like CXC 3 (609 aa).

Positions 69–84 (ESRFRSQKDVSASKEV) are enriched in basic and acidic residues. Disordered stretches follow at residues 69-102 (ESRF…YKND), 307-328 (PISP…SSCK), 457-477 (LFEQ…KTQQ), and 569-609 (NSKR…TPHH). In terms of domain architecture, CRC spans 326–451 (SCKRCNCKKS…RCEGCKNAFG (126 aa)). The segment covering 466-477 (TSGTPGTKKTQQ) has biased composition (polar residues).

This sequence belongs to the lin-54 family. Ubiquitous but expressed mostly in flowers and at significant levels in leaves. Detected with highest levels in developing ovules and microspores, and in petals.

The protein resides in the nucleus. Plays a role in development of both male and female reproductive tissues. The polypeptide is Protein tesmin/TSO1-like CXC 3 (TCX3) (Arabidopsis thaliana (Mouse-ear cress)).